A 322-amino-acid chain; its full sequence is Glycerate dehydrogenase (322 aa).

Residues 158 to 159 (SI), D178, 239 to 241 (TAR), and D265 contribute to the NAD(+) site. Residue R241 is part of the active site. E270 is an active-site residue. H288 (proton donor) is an active-site residue. 288–291 (HIGS) contacts NAD(+).

It belongs to the D-isomer specific 2-hydroxyacid dehydrogenase family. Homodimer.

The catalysed reaction is (R)-glycerate + NAD(+) = 3-hydroxypyruvate + NADH + H(+). The protein operates within one-carbon metabolism; formaldehyde assimilation via serine pathway. Functionally, active on hydroxypyruvate and glyoxylate. This is Glycerate dehydrogenase from Hyphomicrobium methylovorum.